The sequence spans 217 residues: Insulin-like growth factor 2.L (217 aa).

Positions 1–56 (MEQLSCKHRSSSMEAEAQLCRQTESRSTQLPRMSVMRHLFLLSITFLVYTLDSAKA) are cleaved as a signal peptide. The segment at 57–83 (YRPTETLCGGELVDTLQFVCGDRGFYF) is b. 3 cysteine pairs are disulfide-bonded: cysteine 64-cysteine 103, cysteine 76-cysteine 116, and cysteine 102-cysteine 107. The c stretch occupies residues 84–96 (STNNGRSNRRSNR). The interval 97–117 (GIVEECCFRSCDLELLETYCA) is a. The tract at residues 118 to 123 (KPSKNE) is d. The propeptide at 124-217 (RDVSTAPATA…LQQTSEPSHN (94 aa)) is e peptide.

Belongs to the insulin family.

The protein resides in the secreted. Functionally, the insulin-like growth factors, isolated from plasma, are structurally and functionally related to insulin but have a much higher growth-promoting activity. Promotes anterior neural development. Acts as a ligand for integrin which is required for IGF2 signaling. The polypeptide is Insulin-like growth factor 2.L (Xenopus laevis (African clawed frog)).